A 101-amino-acid chain; its full sequence is Small ribosomal subunit protein bS6 (101 aa).

It belongs to the bacterial ribosomal protein bS6 family.

In terms of biological role, binds together with bS18 to 16S ribosomal RNA. The sequence is that of Small ribosomal subunit protein bS6 from Micrococcus luteus (strain ATCC 4698 / DSM 20030 / JCM 1464 / CCM 169 / CCUG 5858 / IAM 1056 / NBRC 3333 / NCIMB 9278 / NCTC 2665 / VKM Ac-2230) (Micrococcus lysodeikticus).